A 493-amino-acid polypeptide reads, in one-letter code: Galactose-1-phosphate uridylyltransferase (493 aa).

The protein belongs to the galactose-1-phosphate uridylyltransferase type 2 family.

The protein resides in the cytoplasm. It carries out the reaction alpha-D-galactose 1-phosphate + UDP-alpha-D-glucose = alpha-D-glucose 1-phosphate + UDP-alpha-D-galactose. Its pathway is carbohydrate metabolism; galactose metabolism. This Lactococcus lactis subsp. cremoris (strain MG1363) protein is Galactose-1-phosphate uridylyltransferase.